We begin with the raw amino-acid sequence, 209 residues long: Chalcone isomerase-like protein 2 (209 aa).

Belongs to the chalcone isomerase family. In terms of assembly, component an active demethylxanthohumol (DMX) biosynthetic metabolon in glandular trichomes (lupulin glands) that encompasses a chalcone synthase (CHS) and a membrane-bound prenyltransferase. Interacts with CHS_H1 and PT1L. As to expression, mostly expressed in glandular trichomes (lupulin glands), and, to a lower extent, in cones, cones bracts, leaves, stems and roots.

It localises to the cytoplasm. The enzyme catalyses a chalcone = a flavanone.. It functions in the pathway secondary metabolite biosynthesis; flavonoid biosynthesis. Its function is as follows. Involved in the biosynthesis of prenylated phenolics natural products which contribute to the bitter taste of beer and display broad biological activities. Involved in anthocyanin biosynthesis. Polyketide binding proteins (PBP) which promotes the catalytic activities of CHS_H1 and PT1L and triggers demethylxanthohumol (DMX) production. In Humulus lupulus (European hop), this protein is Chalcone isomerase-like protein 2.